The sequence spans 1366 residues: DNA-directed RNA polymerase subunit beta' (1366 aa).

Positions 1 to 20 (MTSSKPKKTSRVRKTTKNSK) are enriched in basic residues. The segment at 1 to 34 (MTSSKPKKTSRVRKTTKNSKKNNPLTMPALAKTP) is disordered. The Zn(2+) site is built by C248, C315, C322, and C325. The disordered stretch occupies residues 1291–1366 (YTVDMPQSPS…LQEEGLLSDE (76 aa)). Residues 1295-1305 (MPQSPSVSSTA) show a composition bias toward polar residues. Low complexity predominate over residues 1354–1366 (LEGLQEEGLLSDE).

Belongs to the RNA polymerase beta' chain family. RpoC2 subfamily. As to quaternary structure, in cyanobacteria the RNAP catalytic core is composed of 2 alpha, 1 beta, 1 beta', 1 gamma and 1 omega subunit. When a sigma factor is associated with the core the holoenzyme is formed, which can initiate transcription. It depends on Zn(2+) as a cofactor.

It catalyses the reaction RNA(n) + a ribonucleoside 5'-triphosphate = RNA(n+1) + diphosphate. DNA-dependent RNA polymerase catalyzes the transcription of DNA into RNA using the four ribonucleoside triphosphates as substrates. The protein is DNA-directed RNA polymerase subunit beta' of Prochlorococcus marinus (strain MIT 9301).